The sequence spans 231 residues: 7-cyano-7-deazaguanine synthase (231 aa).

8–18 (FSGGQDSTTCL) contributes to the ATP binding site. Zn(2+)-binding residues include Cys-188, Cys-197, Cys-200, and Cys-203.

The protein belongs to the QueC family. The cofactor is Zn(2+).

It carries out the reaction 7-carboxy-7-deazaguanine + NH4(+) + ATP = 7-cyano-7-deazaguanine + ADP + phosphate + H2O + H(+). Its pathway is purine metabolism; 7-cyano-7-deazaguanine biosynthesis. Catalyzes the ATP-dependent conversion of 7-carboxy-7-deazaguanine (CDG) to 7-cyano-7-deazaguanine (preQ(0)). This chain is 7-cyano-7-deazaguanine synthase, found in Escherichia coli O127:H6 (strain E2348/69 / EPEC).